Consider the following 461-residue polypeptide: Cysteine--tRNA ligase (461 aa).

Cysteine 31 contacts Zn(2+). Positions 33–43 match the 'HIGH' region motif; that stretch reads PTVYDFAHIGN. 3 residues coordinate Zn(2+): cysteine 219, histidine 244, and glutamate 248. The 'KMSKS' region motif lies at 277 to 281; the sequence is KMSKS. Residue lysine 280 coordinates ATP. Residues 436-452 show a composition bias toward basic and acidic residues; it reads SEKGIQLKDGKDKETGE. A disordered region spans residues 436 to 461; the sequence is SEKGIQLKDGKDKETGERTTTWELKR.

The protein belongs to the class-I aminoacyl-tRNA synthetase family. In terms of assembly, monomer. The cofactor is Zn(2+).

It is found in the cytoplasm. The enzyme catalyses tRNA(Cys) + L-cysteine + ATP = L-cysteinyl-tRNA(Cys) + AMP + diphosphate. The protein is Cysteine--tRNA ligase of Agrobacterium fabrum (strain C58 / ATCC 33970) (Agrobacterium tumefaciens (strain C58)).